We begin with the raw amino-acid sequence, 97 residues long: uncharacterized protein (97 aa).

A run of 3 helical transmembrane segments spans residues 5 to 25 (INYL…FVGI), 49 to 71 (IAGY…SFQG), and 75 to 92 (LIPP…IYVN).

It localises to the cell membrane. This is an uncharacterized protein from Bacillus subtilis (strain 168).